The chain runs to 149 residues: Oligosaccharyltransferase complex subunit ostc (149 aa).

The Cytoplasmic portion of the chain corresponds to 1–32 (MESLYRVPFTVLECPNLKLKKPSWLHMPSAMT). Residues 33–53 (VYAMVVVSYFLITGGIIYDVI) form a helical membrane-spanning segment. Over 54-83 (VEPPSVGSMTDEHGHQRPVAFLAYRVNGQY) the chain is Extracellular. A helical membrane pass occupies residues 84–104 (IMEGLASSFLFTMGGLGFIIL). The Cytoplasmic segment spans residues 105 to 117 (DRSNAPNIPKLNR). Residues 118 to 138 (FLLLFIGFVCVLLSFFMARVF) traverse the membrane as a helical segment. Topologically, residues 139 to 149 (MRMKLPGYLMG) are extracellular.

This sequence belongs to the OSTC family. In terms of assembly, specific component of the STT3A-containing form of the oligosaccharyltransferase (OST) complex.

The protein localises to the membrane. It participates in protein modification; protein glycosylation. In terms of biological role, specific component of the STT3A-containing form of the oligosaccharyl transferase (OST) complex that catalyzes the initial transfer of a defined glycan (Glc(3)Man(9)GlcNAc(2) in eukaryotes) from the lipid carrier dolichol-pyrophosphate to an asparagine residue within an Asn-X-Ser/Thr consensus motif in nascent polypeptide chains, the first step in protein N-glycosylation. N-glycosylation occurs cotranslationally and the complex associates with the Sec61 complex at the channel-forming translocon complex that mediates protein translocation across the endoplasmic reticulum (ER). All subunits are required for a maximal enzyme activity. The chain is Oligosaccharyltransferase complex subunit ostc from Xenopus tropicalis (Western clawed frog).